A 143-amino-acid chain; its full sequence is Anti-sigma F factor (143 aa).

This sequence belongs to the anti-sigma-factor family.

The enzyme catalyses L-seryl-[protein] + ATP = O-phospho-L-seryl-[protein] + ADP + H(+). The catalysed reaction is L-threonyl-[protein] + ATP = O-phospho-L-threonyl-[protein] + ADP + H(+). Binds to sigma F and blocks its ability to form an RNA polymerase holoenzyme (E-sigma F). Phosphorylates SpoIIAA on a serine residue. This phosphorylation may enable SpoIIAA to act as an anti-anti-sigma factor that counteracts SpoIIAB and thus releases sigma F from inhibition. This chain is Anti-sigma F factor, found in Clostridium botulinum (strain Eklund 17B / Type B).